The sequence spans 140 residues: Hemoglobin subunit beta (140 aa).

In terms of domain architecture, Globin spans 1–140; sequence GSDLVSGFWG…VGDALAKAYH (140 aa). 2 residues coordinate heme b: histidine 57 and histidine 86.

This sequence belongs to the globin family. In terms of assembly, heterotetramer of two alpha chains and two beta chains. In terms of tissue distribution, red blood cells.

Involved in oxygen transport from the lung to the various peripheral tissues. In Pelophylax lessonae (Pool frog), this protein is Hemoglobin subunit beta (HBB).